The chain runs to 317 residues: tRNA pseudouridine synthase B (317 aa).

The active-site Nucleophile is aspartate 47.

The protein belongs to the pseudouridine synthase TruB family. Type 1 subfamily.

It carries out the reaction uridine(55) in tRNA = pseudouridine(55) in tRNA. Its function is as follows. Responsible for synthesis of pseudouridine from uracil-55 in the psi GC loop of transfer RNAs. The sequence is that of tRNA pseudouridine synthase B from Shewanella frigidimarina (strain NCIMB 400).